The sequence spans 306 residues: HTH-type transcriptional regulator AlkR (306 aa).

Residues 207–305 form the HTH araC/xylS-type domain; that stretch reads SNALAAIHAY…EQSPKHYRQQ (99 aa). 2 DNA-binding regions (H-T-H motif) span residues 224–245 and 272–295; these read ESLADQCCMSRSKFATLFQSIV and IQQIANKVGYSSETAFSQAFKRQF.

It participates in hydrocarbon metabolism; alkane degradation. Its function is as follows. This protein activates the expression of the alkane 1-monooxygenase AlkM. This is HTH-type transcriptional regulator AlkR (alkR) from Acinetobacter baylyi (strain ATCC 33305 / BD413 / ADP1).